The chain runs to 210 residues: RNA binding protein, mRNA processing factor 2 (210 aa).

A compositionally biased stretch (basic and acidic residues) spans 1-10 (MSNLKPDVEH). Positions 1–25 (MSNLKPDVEHCTGAGTGTGTGPSGP) are disordered. Ser2 is modified (N-acetylserine). Positions 31-108 (RTLFVSGLPV…QTLRLEFAKA (78 aa)) constitute an RRM domain. An important for homodimerization region spans residues 41 to 51 (DIKPRELYLLF).

In terms of assembly, homodimer. Interacts with EEF2.

The protein resides in the cytoplasm. The protein localises to the nucleus. It localises to the stress granule. RNA-binding protein involved in the regulation of smooth muscle cell differentiation and proliferation in the gastrointestinal system. Binds NOG mRNA, the major inhibitor of the bone morphogenetic protein (BMP) pathway. Mediates an increase of NOG mRNA levels, thereby contributing to the negative regulation of BMP signaling pathway and promoting reversible dedifferentiation and proliferation of smooth muscle cells. Acts as a pre-mRNA alternative splicing regulator. Mediates ACTN1 and FLNB alternative splicing. Likely binds to mRNA tandem CAC trinucleotide or CA dinucleotide motifs. The protein is RNA binding protein, mRNA processing factor 2 (Rbpms2) of Rattus norvegicus (Rat).